Consider the following 146-residue polypeptide: 3-dehydroquinate dehydratase (146 aa).

The active-site Proton acceptor is the Y22. Residues N73, H79, and D86 each contribute to the substrate site. The active-site Proton donor is H99. Residues 100 to 101 (LS) and R110 contribute to the substrate site.

Belongs to the type-II 3-dehydroquinase family. Homododecamer.

The enzyme catalyses 3-dehydroquinate = 3-dehydroshikimate + H2O. It participates in metabolic intermediate biosynthesis; chorismate biosynthesis; chorismate from D-erythrose 4-phosphate and phosphoenolpyruvate: step 3/7. Its function is as follows. Catalyzes a trans-dehydration via an enolate intermediate. The polypeptide is 3-dehydroquinate dehydratase (Synechococcus sp. (strain CC9605)).